The chain runs to 258 residues: Probable F-box protein At2g29610 (258 aa).

Residues 1 to 25 are disordered; that stretch reads MVELSEIPGDPNGADPNNNPQEEDE. The segment covering 8–20 has biased composition (low complexity); that stretch reads PGDPNGADPNNNP. Residues 28 to 74 enclose the F-box domain; sequence LPILLQLPEELIERIIAHFPQCYSPSPILVCETFRQVINSDHFYYVT.

In Arabidopsis thaliana (Mouse-ear cress), this protein is Probable F-box protein At2g29610.